Reading from the N-terminus, the 383-residue chain is Protein delta homolog 2 (383 aa).

Residues 1 to 26 form the signal peptide; the sequence is MPSGCRCLHLVCLLCILGAPVKPARG. 4 EGF-like domains span residues 27 to 58, 62 to 89, 91 to 129, and 131 to 172; these read NDCS…LHCE, RMPG…KFCD, DEHI…RDCE, and KAGP…ARCE. The Extracellular segment spans residues 27–306; that stretch reads NDCSSLCDLA…RQEAGLGEPS (280 aa). 17 disulfides stabilise this stretch: cysteine 29–cysteine 40, cysteine 33–cysteine 46, cysteine 48–cysteine 57, cysteine 66–cysteine 71, cysteine 79–cysteine 88, cysteine 95–cysteine 107, cysteine 101–cysteine 117, cysteine 119–cysteine 128, cysteine 135–cysteine 148, cysteine 142–cysteine 160, cysteine 162–cysteine 171, cysteine 178–cysteine 189, cysteine 183–cysteine 198, cysteine 200–cysteine 209, cysteine 216–cysteine 227, cysteine 221–cysteine 236, and cysteine 238–cysteine 247. A glycan (N-linked (GlcNAc...) asparagine) is linked at asparagine 157. Positions 174–210 constitute an EGF-like 5; calcium-binding domain; the sequence is NVDDCLMRPCANGATCLDGINRFSCLCPEGFTGRFCT. The region spanning 212–248 is the EGF-like 6; calcium-binding domain; that stretch reads NLDDCASRPCQRGARCRDRVHDFDCLCPSGYGGKTCE. A helical membrane pass occupies residues 307 to 327; that stretch reads LVAVVVFGAVTAALVLSTVLL. The Cytoplasmic segment spans residues 328–383; sequence TLRAWRRGFCPPGPCCYPAPHYAPARQDQECQVSMLPTGLPLPPDLPPEPGKTTAL. Residues 364-383 form a disordered region; the sequence is PTGLPLPPDLPPEPGKTTAL. Over residues 367–377 the composition is skewed to pro residues; the sequence is LPLPPDLPPEP.

It localises to the membrane. Its function is as follows. Regulates adipogenesis. This chain is Protein delta homolog 2 (DLK2), found in Bos taurus (Bovine).